The primary structure comprises 476 residues: Efflux pump atB (476 aa).

Residues 1–38 (MAPQLAGSSHSSSASDQAHRQSSDPALESGSDTHVGSI) are disordered. The next 10 helical transmembrane spans lie at 69-89 (LIVA…LAPL), 96-116 (KPVY…CAVA), 127-147 (FFNG…VGDL), 186-206 (WSFY…SLLV), 264-284 (LLLC…FGAF), 294-314 (FNLW…IIGI), 347-367 (LPPA…FAWT), 372-392 (VHWI…IMIF), 403-425 (YPLY…AAAF), and 440-460 (WAGF…YIFY).

This sequence belongs to the major facilitator superfamily.

The protein resides in the cell membrane. Its function is as follows. Efflux pump that might be required for efficient secretion of terreic acid. The polypeptide is Efflux pump atB (Aspergillus terreus (strain NIH 2624 / FGSC A1156)).